We begin with the raw amino-acid sequence, 506 residues long: Maturase K (506 aa).

The protein belongs to the intron maturase 2 family. MatK subfamily.

It localises to the plastid. The protein resides in the chloroplast. In terms of biological role, usually encoded in the trnK tRNA gene intron. Probably assists in splicing its own and other chloroplast group II introns. The sequence is that of Maturase K from Trifolium willdenovii (Tomcat clover).